The primary structure comprises 250 residues: MIAWLDPQDPFPPVEHALGPDSEAPGLLAASRELSPQRLLLAYRQGIFPWYSSGQPVLWWSTDPRMVLAPPALRVSVNLRKTLRRVLRDADWEIRVDHDFLAVMRACASTPREGQDGTWITDAIIAAYGALHRNGLAHSVESWYRGERVGGLYGVALGRMFFGESMFAHRTDASKIALAALCAFLGNHGVAMIDCQQETDHLASLGARPIPRAEFVAHVRAATAQPAISPWRFDKSVLERWAGTPAAPAA.

The protein belongs to the L/F-transferase family.

It is found in the cytoplasm. The enzyme catalyses N-terminal L-lysyl-[protein] + L-leucyl-tRNA(Leu) = N-terminal L-leucyl-L-lysyl-[protein] + tRNA(Leu) + H(+). The catalysed reaction is N-terminal L-arginyl-[protein] + L-leucyl-tRNA(Leu) = N-terminal L-leucyl-L-arginyl-[protein] + tRNA(Leu) + H(+). It carries out the reaction L-phenylalanyl-tRNA(Phe) + an N-terminal L-alpha-aminoacyl-[protein] = an N-terminal L-phenylalanyl-L-alpha-aminoacyl-[protein] + tRNA(Phe). In terms of biological role, functions in the N-end rule pathway of protein degradation where it conjugates Leu, Phe and, less efficiently, Met from aminoacyl-tRNAs to the N-termini of proteins containing an N-terminal arginine or lysine. This Cupriavidus taiwanensis (strain DSM 17343 / BCRC 17206 / CCUG 44338 / CIP 107171 / LMG 19424 / R1) (Ralstonia taiwanensis (strain LMG 19424)) protein is Leucyl/phenylalanyl-tRNA--protein transferase.